The chain runs to 40 residues: GCIPKHKRCTWSGPKCCNNISCHCNISGTLCKCRPGLFGW.

Cystine bridges form between C2/C17, C9/C22, C16/C33, and C24/C31. The residue at position 40 (W40) is a Tryptophan amide.

Post-translationally, contains 4 disulfide bonds. In terms of tissue distribution, expressed by the venom gland.

It is found in the secreted. This chain is Toxin CSTX-17, found in Cupiennius salei (American wandering spider).